A 55-amino-acid chain; its full sequence is Large ribosomal subunit protein bL33 (55 aa).

It belongs to the bacterial ribosomal protein bL33 family.

The chain is Large ribosomal subunit protein bL33 from Phenylobacterium zucineum (strain HLK1).